The sequence spans 206 residues: Translation initiation factor IF-3 (206 aa).

Belongs to the IF-3 family. In terms of assembly, monomer.

The protein localises to the cytoplasm. Functionally, IF-3 binds to the 30S ribosomal subunit and shifts the equilibrium between 70S ribosomes and their 50S and 30S subunits in favor of the free subunits, thus enhancing the availability of 30S subunits on which protein synthesis initiation begins. The polypeptide is Translation initiation factor IF-3 (Chlorobium luteolum (strain DSM 273 / BCRC 81028 / 2530) (Pelodictyon luteolum)).